Consider the following 449-residue polypeptide: Omega-amino acid--pyruvate aminotransferase (449 aa).

A substrate-binding site is contributed by W60. 119 to 120 (GS) lines the pyridoxal 5'-phosphate pocket. K288 bears the N6-(pyridoxal phosphate)lysine mark. A pyridoxal 5'-phosphate-binding site is contributed by T327. Substrate contacts are provided by R414 and Q421.

Belongs to the class-III pyridoxal-phosphate-dependent aminotransferase family. In terms of assembly, homotetramer. The cofactor is pyridoxal 5'-phosphate.

The catalysed reaction is 3-oxopropanoate + L-alanine = beta-alanine + pyruvate. In terms of biological role, catalyzes transamination between a variety of omega-amino acids, mono and diamines, and pyruvate. Plays a pivotal role in the metabolism of the omega amino acids. The chain is Omega-amino acid--pyruvate aminotransferase from Pseudomonas putida (Arthrobacter siderocapsulatus).